The following is a 692-amino-acid chain: Elongation factor G (692 aa).

Residues 8–282 (ENTRNIGIMA…AVIDYLPSPL (275 aa)) form the tr-type G domain. GTP contacts are provided by residues 17–24 (AHIDAGKT), 81–85 (DTPGH), and 135–138 (NKMD).

This sequence belongs to the TRAFAC class translation factor GTPase superfamily. Classic translation factor GTPase family. EF-G/EF-2 subfamily.

The protein localises to the cytoplasm. Its function is as follows. Catalyzes the GTP-dependent ribosomal translocation step during translation elongation. During this step, the ribosome changes from the pre-translocational (PRE) to the post-translocational (POST) state as the newly formed A-site-bound peptidyl-tRNA and P-site-bound deacylated tRNA move to the P and E sites, respectively. Catalyzes the coordinated movement of the two tRNA molecules, the mRNA and conformational changes in the ribosome. In Bacillus cereus (strain ATCC 10987 / NRS 248), this protein is Elongation factor G.